The following is a 304-amino-acid chain: Ribosomal RNA small subunit methyltransferase H (304 aa).

S-adenosyl-L-methionine contacts are provided by residues 37 to 39, aspartate 57, phenylalanine 79, aspartate 100, and histidine 107; that span reads GGH.

It belongs to the methyltransferase superfamily. RsmH family.

The protein resides in the cytoplasm. It carries out the reaction cytidine(1402) in 16S rRNA + S-adenosyl-L-methionine = N(4)-methylcytidine(1402) in 16S rRNA + S-adenosyl-L-homocysteine + H(+). Functionally, specifically methylates the N4 position of cytidine in position 1402 (C1402) of 16S rRNA. The protein is Ribosomal RNA small subunit methyltransferase H of Bacteroides fragilis (strain ATCC 25285 / DSM 2151 / CCUG 4856 / JCM 11019 / LMG 10263 / NCTC 9343 / Onslow / VPI 2553 / EN-2).